We begin with the raw amino-acid sequence, 382 residues long: MFTYTRPVMLLLCGLLLLTLAIAVLNTLVLLWLAQANLPTWQVGMVSSSYFTGNLVGTLFTGYLIKRIGFNRSYYLASLIFAAGCVGLGVMVGFWSWMSWRFIAGIGCAMIWVVVESALMCSGTSHNRGRLLAAYMMVYYMGTFLGQLLVSKVSGELLHVLPWVTGMILAGILPLLFTRIVNQQTQTRHSSSISAMLKLRQARLGVNGCIISGIVLGSLYGLMPLYLKHQGMANASIGFWMAVLVSAGILGQWPMGRLADKFGRLLVLRVQVFVVILGSIAMLTQAAMAPALFILGAAGFTLYPVAMAWACEKVEHHQLVAMNQALLLSYTVGSLLGPSFAAMLMQNYSDNLLFIMIASVSFIYLLMLLRNAGQTPNPVAHI.

The next 12 membrane-spanning stretches (helical) occupy residues 14 to 34 (GLLLLTLAIAVLNTLVLLWLA), 45 to 65 (MVSSSYFTGNLVGTLFTGYLI), 75 to 95 (YLASLIFAAGCVGLGVMVGFW), 102 to 122 (FIAGIGCAMIWVVVESALMCS), 131 to 151 (LLAAYMMVYYMGTFLGQLLVS), 157 to 177 (LLHVLPWVTGMILAGILPLLF), 204 to 224 (LGVNGCIISGIVLGSLYGLMP), 231 to 251 (GMANASIGFWMAVLVSAGILG), 270 to 290 (VQVFVVILGSIAMLTQAAMAP), 291 to 311 (ALFILGAAGFTLYPVAMAWAC), 325 to 345 (ALLLSYTVGSLLGPSFAAMLM), and 349 to 369 (SDNLLFIMIASVSFIYLLMLL).

This sequence belongs to the major facilitator superfamily. YcaD (TC 2.A.1.26) family.

It localises to the cell inner membrane. This is an uncharacterized protein from Salmonella paratyphi A (strain ATCC 9150 / SARB42).